We begin with the raw amino-acid sequence, 307 residues long: MTAEQQAGQGATRCGFVALIGAPNVGKSTLVNALVGSKVTIVSRKVQTTRALIRGIVIEGQSQIILVDTPGIFSPKRRLDRAMVTTAWSGAHDADLVCVLLDAKKGLDDEAQAIIDKAASVAHEKILVVNKVDLVPREKLLALVAAANEKLAFARTFMISALSGDGVDDLRRALAEMVPPGPFHYPEDQMSDAPMRHLAAEITREKIYSHLHQELPYQSTVETDSWTERNDGSIRIEQTIFVERDSQRKIVLGKGGATIKSIGAQSRKEIAEITGVPVHLFLFVKVRENWGDDPDRYREMGLEFPRE.

In terms of domain architecture, Era-type G spans 13–180 (RCGFVALIGA…RRALAEMVPP (168 aa)). The G1 stretch occupies residues 21-28 (GAPNVGKS). 21–28 (GAPNVGKS) lines the GTP pocket. The tract at residues 47–51 (QTTRA) is G2. Positions 68–71 (DTPG) are G3. GTP-binding positions include 68 to 72 (DTPGI) and 130 to 133 (NKVD). Residues 130–133 (NKVD) form a G4 region. The segment at 159–161 (ISA) is G5. The KH type-2 domain occupies 211-288 (LHQELPYQST…HLFLFVKVRE (78 aa)).

Belongs to the TRAFAC class TrmE-Era-EngA-EngB-Septin-like GTPase superfamily. Era GTPase family. In terms of assembly, monomer.

The protein resides in the cytoplasm. The protein localises to the cell inner membrane. Its function is as follows. An essential GTPase that binds both GDP and GTP, with rapid nucleotide exchange. Plays a role in 16S rRNA processing and 30S ribosomal subunit biogenesis and possibly also in cell cycle regulation and energy metabolism. This chain is GTPase Era, found in Bradyrhizobium sp. (strain ORS 278).